A 257-amino-acid polypeptide reads, in one-letter code: Staphylococcal secretory antigen SsaA (257 aa).

The N-terminal stretch at 1–26 (MKKIATATIATAGIATFAFAHHDAQA) is a signal peptide. 8 repeat units span residues 73-75 (YNN), 76-78 (YNN), 84-86 (YNN), 87-89 (YSN), 90-92 (YNN), 93-95 (YSN), 96-98 (YNN), and 99-101 (YNN). The tract at residues 73–101 (YNNYNNYNYYGYNNYSNYNNYSNYNNYNN) is 8 X 3 AA repeats of Y-[NS]-N. Residues 101-144 (NYQSNNTQSQRTTQPTGGLGASYSTSSSNVHVTTTSAPSSNGVS) form a disordered region. The span at 107–116 (TQSQRTTQPT) shows a compositional bias: polar residues. The segment covering 122–136 (SYSTSSSNVHVTTTS) has biased composition (low complexity). Positions 136–257 (SAPSSNGVSL…SQAASYNYIH (122 aa)) constitute a Peptidase C51 domain.

The protein resides in the secreted. In terms of biological role, not known; immunogenic protein expressed during sepsis and particularly during episodes of infective endocarditis. The protein is Staphylococcal secretory antigen SsaA (ssaA) of Staphylococcus epidermidis.